Reading from the N-terminus, the 430-residue chain is MTAIVDIIGREILDSRGNPTVEVDVVLEDGAVGRAAVPSGASTGAHEAVELRDGDKERYFGKGVLKAVEAVNGEIFDALGGMDAEQQVQIDEIMIGLDGTPNKSRLGANAILGVSLAVAKAAAESFDMPLYRYVGGTSARTLPVPMMNIINGGVHADNPIDFQEFMIMPIGAPSFSEALRMGAEVFHTLKKSLHDEGHNTNVGDEGGFAPNLKSADEALTYIMRAIEKAGYKPGEDIALALDPASSEFFKNGSYVYEGEKKARNIDAQAKYLAELVGRYPIVSIEDGMAEDDFEGWKQVTELIGDKCQLVGDDLFVTNVERLSDGIKNGRANSILIKVNQIGTLTETLAAIEMAYKAGYTAVMSHRSGETEDSTIADLAVASNCGQIKTGSLARADRTAKYNQLLRIEQELGGQAKFAGRAALKAFRYLD.

Residue glutamine 163 participates in (2R)-2-phosphoglycerate binding. Glutamate 205 serves as the catalytic Proton donor. Mg(2+) is bound by residues aspartate 242, glutamate 285, and aspartate 312. Positions 337, 366, 367, and 388 each coordinate (2R)-2-phosphoglycerate. Catalysis depends on lysine 337, which acts as the Proton acceptor.

It belongs to the enolase family. Mg(2+) is required as a cofactor.

The protein resides in the cytoplasm. The protein localises to the secreted. It is found in the cell surface. It catalyses the reaction (2R)-2-phosphoglycerate = phosphoenolpyruvate + H2O. The protein operates within carbohydrate degradation; glycolysis; pyruvate from D-glyceraldehyde 3-phosphate: step 4/5. In terms of biological role, catalyzes the reversible conversion of 2-phosphoglycerate (2-PG) into phosphoenolpyruvate (PEP). It is essential for the degradation of carbohydrates via glycolysis. In Rhodopseudomonas palustris (strain BisB18), this protein is Enolase.